We begin with the raw amino-acid sequence, 611 residues long: Probable methyltransferase PMT19 (611 aa).

The Cytoplasmic portion of the chain corresponds to 1-15 (MNPSQQHLPKLCPKR). The helical; Signal-anchor for type II membrane protein transmembrane segment at 16–36 (LFLFFTPFLLFSLYYILTTIK) threads the bilayer. Over 37–611 (TITISSQDRH…TILIVDNSIK (575 aa)) the chain is Lumenal. N68, N97, N289, N408, N411, and N587 each carry an N-linked (GlcNAc...) asparagine glycan.

The protein belongs to the methyltransferase superfamily.

It localises to the endoplasmic reticulum membrane. This is Probable methyltransferase PMT19 from Arabidopsis thaliana (Mouse-ear cress).